Reading from the N-terminus, the 213-residue chain is tRNA (guanine-N(7)-)-methyltransferase (213 aa).

S-adenosyl-L-methionine-binding residues include Glu44, Asp69, Asp96, and Asp118. The active site involves Asp118. Lys122 contacts substrate. Residues 124-129 (RHEKRR) are interaction with RNA. Residues Asp154 and 191-194 (TEYE) each bind substrate.

The protein belongs to the class I-like SAM-binding methyltransferase superfamily. TrmB family.

The catalysed reaction is guanosine(46) in tRNA + S-adenosyl-L-methionine = N(7)-methylguanosine(46) in tRNA + S-adenosyl-L-homocysteine. It participates in tRNA modification; N(7)-methylguanine-tRNA biosynthesis. Functionally, catalyzes the formation of N(7)-methylguanine at position 46 (m7G46) in tRNA. The chain is tRNA (guanine-N(7)-)-methyltransferase from Streptococcus thermophilus (strain CNRZ 1066).